We begin with the raw amino-acid sequence, 549 residues long: Chaperonin GroEL (549 aa).

Residues 30–33, K51, 87–91, G415, and D495 each bind ATP; these read TLGP and DGTTT.

This sequence belongs to the chaperonin (HSP60) family. In terms of assembly, forms a cylinder of 14 subunits composed of two heptameric rings stacked back-to-back. Interacts with the co-chaperonin GroES.

The protein localises to the cytoplasm. It catalyses the reaction ATP + H2O + a folded polypeptide = ADP + phosphate + an unfolded polypeptide.. Together with its co-chaperonin GroES, plays an essential role in assisting protein folding. The GroEL-GroES system forms a nano-cage that allows encapsulation of the non-native substrate proteins and provides a physical environment optimized to promote and accelerate protein folding. This chain is Chaperonin GroEL, found in Colwellia maris.